The sequence spans 661 residues: DNA ligase (661 aa).

NAD(+) is bound by residues 31-35 (DSGYD), 80-81 (SL), and E109. The N6-AMP-lysine intermediate role is filled by K111. R132, E167, K283, and K307 together coordinate NAD(+). Zn(2+) is bound by residues C401, C404, C419, and C424. Residues 582–661 (AGEQLLQGKT…AGFLNLLGLS (80 aa)) enclose the BRCT domain.

This sequence belongs to the NAD-dependent DNA ligase family. LigA subfamily. Mg(2+) is required as a cofactor. It depends on Mn(2+) as a cofactor.

The catalysed reaction is NAD(+) + (deoxyribonucleotide)n-3'-hydroxyl + 5'-phospho-(deoxyribonucleotide)m = (deoxyribonucleotide)n+m + AMP + beta-nicotinamide D-nucleotide.. Functionally, DNA ligase that catalyzes the formation of phosphodiester linkages between 5'-phosphoryl and 3'-hydroxyl groups in double-stranded DNA using NAD as a coenzyme and as the energy source for the reaction. It is essential for DNA replication and repair of damaged DNA. In Syntrophomonas wolfei subsp. wolfei (strain DSM 2245B / Goettingen), this protein is DNA ligase.